A 493-amino-acid chain; its full sequence is Cysteine sulfinic acid decarboxylase (493 aa).

K305 carries the post-translational modification N6-(pyridoxal phosphate)lysine.

It belongs to the group II decarboxylase family. As to quaternary structure, homodimer. Pyridoxal 5'-phosphate serves as cofactor. Expressed in liver and brain. Also expressed in both astrocytes and neurons, but lower levels are expressed in astrocytes.

It carries out the reaction L-aspartate + H(+) = beta-alanine + CO2. The catalysed reaction is 3-sulfino-L-alanine + H(+) = hypotaurine + CO2. It catalyses the reaction L-cysteate + H(+) = taurine + CO2. Its pathway is organosulfur biosynthesis; taurine biosynthesis; hypotaurine from L-cysteine: step 2/2. Its function is as follows. Catalyzes the decarboxylation of L-aspartate, 3-sulfino-L-alanine (cysteine sulfinic acid), and L-cysteate to beta-alanine, hypotaurine and taurine, respectively. The preferred substrate is 3-sulfino-L-alanine. Does not exhibit any decarboxylation activity toward glutamate. This is Cysteine sulfinic acid decarboxylase (CSAD) from Homo sapiens (Human).